The sequence spans 303 residues: 1D-myo-inositol 2-acetamido-2-deoxy-alpha-D-glucopyranoside deacetylase (303 aa).

Residues His15, Asp18, and His157 each contribute to the Zn(2+) site.

Belongs to the MshB deacetylase family. Zn(2+) serves as cofactor.

The enzyme catalyses 1D-myo-inositol 2-acetamido-2-deoxy-alpha-D-glucopyranoside + H2O = 1D-myo-inositol 2-amino-2-deoxy-alpha-D-glucopyranoside + acetate. Catalyzes the deacetylation of 1D-myo-inositol 2-acetamido-2-deoxy-alpha-D-glucopyranoside (GlcNAc-Ins) in the mycothiol biosynthesis pathway. The protein is 1D-myo-inositol 2-acetamido-2-deoxy-alpha-D-glucopyranoside deacetylase of Kribbella flavida (strain DSM 17836 / JCM 10339 / NBRC 14399).